We begin with the raw amino-acid sequence, 78 residues long: Delta-conotoxin TxVIA (78 aa).

The signal sequence occupies residues 1-22 (MKLTCMMIVAVLFLTAWTFATA). Residues 23–49 (DDSGNGLENLFSNAHHQMKNPEASKLN) constitute a propeptide that is removed on maturation. Cystine bridges form between C53-C68, C60-C72, and C67-C77. M59 bears the Methionine sulfoxide; partial mark.

It belongs to the conotoxin O1 superfamily. As to expression, expressed by the venom duct. Is present in all duct parts with a highest content in part 4 (distal part near the pharynx).

The protein resides in the secreted. In terms of biological role, delta-conotoxins bind to site 6 of voltage-gated sodium channels (Nav) and inhibit the inactivation process. Binding of this toxin is strongly calcium-dependent but not voltage-dependent. The binding site is most likely on the extracellular side of the sodium channel. Binds receptor sites on both mollusk and rat central nervous system, but despite its high affinity binding to rat sodium channel, it has no functional effect in vivo and in vitro on it. Also has no effect on Gambusia fish. Is important in mollusk for the paralysis of the prey. Upon injection of the peptide, a subordinate lobster assumes an exaggerated dominant posture (of a 'King-Kong' lobster!). This Conus textile (Cloth-of-gold cone) protein is Delta-conotoxin TxVIA.